A 221-amino-acid polypeptide reads, in one-letter code: N-(5'-phosphoribosyl)anthranilate isomerase (221 aa).

The protein belongs to the TrpF family.

The enzyme catalyses N-(5-phospho-beta-D-ribosyl)anthranilate = 1-(2-carboxyphenylamino)-1-deoxy-D-ribulose 5-phosphate. Its pathway is amino-acid biosynthesis; L-tryptophan biosynthesis; L-tryptophan from chorismate: step 3/5. In Parabacteroides distasonis (strain ATCC 8503 / DSM 20701 / CIP 104284 / JCM 5825 / NCTC 11152), this protein is N-(5'-phosphoribosyl)anthranilate isomerase.